The sequence spans 347 residues: MSATSIQPLLDILFLGKALTREQTASLFSTLIQGEMNEAVMAAMLMALKIRGETIAEISGAADAMRAAAKPFPYPASSRSQGIIDIVGTGGDGFNTINISTTAAFVAAAAGAKVAKHGNRSVSSKSGSSDLLAQFGIDLTMSPELASRCLESLNLCFLFAPHYHGGVKHAVPVRQALKTRTLFNVLGPLINPARPEFMLLGVYSPELVTPIARVLQALGTQRAMVVHGSGLDEVALHGSTQVAELKDGEIIEYQLTPADFGVPQAQISELEGGEPAQNAQITQSILQGQGSDAHTHAVAINAGCALYLCGLSDSVKAGTALALNTIKSGKAFELLNQLAKVSSEAQE.

Residues glycine 88, 91–92, threonine 96, 98–101, 116–124, and serine 128 contribute to the 5-phospho-alpha-D-ribose 1-diphosphate site; these read GD, NIST, and KHGNRSVSS. Residue glycine 88 participates in anthranilate binding. Serine 100 serves as a coordination point for Mg(2+). Position 119 (asparagine 119) interacts with anthranilate. Arginine 174 is a binding site for anthranilate. Mg(2+) is bound by residues aspartate 232 and glutamate 233.

It belongs to the anthranilate phosphoribosyltransferase family. Homodimer. Mg(2+) serves as cofactor.

It catalyses the reaction N-(5-phospho-beta-D-ribosyl)anthranilate + diphosphate = 5-phospho-alpha-D-ribose 1-diphosphate + anthranilate. The protein operates within amino-acid biosynthesis; L-tryptophan biosynthesis; L-tryptophan from chorismate: step 2/5. Catalyzes the transfer of the phosphoribosyl group of 5-phosphorylribose-1-pyrophosphate (PRPP) to anthranilate to yield N-(5'-phosphoribosyl)-anthranilate (PRA). The sequence is that of Anthranilate phosphoribosyltransferase from Shewanella sp. (strain ANA-3).